Here is an 880-residue protein sequence, read N- to C-terminus: Xylosyltransferase oxt (880 aa).

The Cytoplasmic portion of the chain corresponds to 1–14 (MEQSVSARWLRRYR). A helical; Signal-anchor for type II membrane protein transmembrane segment spans residues 15 to 35 (PVLIILVLIFGIQLFLAYKSV). The Lumenal segment spans residues 36–880 (DIGGGSGSGL…PKSDVDALLK (845 aa)). 4 cysteine pairs are disulfide-bonded: Cys-87-Cys-115, Cys-131-Cys-469, Cys-488-Cys-501, and Cys-490-Cys-499. Residues Asn-135 and Asn-139 are each glycosylated (N-linked (GlcNAc...) asparagine). Residues 138–232 (ANVSLGCYRD…FYAMNIYETG (95 aa)) enclose the WSC domain. UDP-alpha-D-xylose contacts are provided by residues Asp-287 and 316 to 318 (TIW). N-linked (GlcNAc...) asparagine glycosylation occurs at Asn-346. UDP-alpha-D-xylose is bound at residue 419 to 420 (DW). UDP-alpha-D-xylose is bound by residues Ser-502 and 526–527 (RK). Residues Asn-700 and Asn-729 are each glycosylated (N-linked (GlcNAc...) asparagine). A disulfide bond links Cys-846 and Cys-859.

This sequence belongs to the glycosyltransferase 14 family. XylT subfamily. It depends on Ca(2+) as a cofactor. Mn(2+) serves as cofactor. Requires Mg(2+) as cofactor.

It localises to the endoplasmic reticulum membrane. The protein resides in the golgi apparatus membrane. The enzyme catalyses UDP-alpha-D-xylose + L-seryl-[protein] = 3-O-(beta-D-xylosyl)-L-seryl-[protein] + UDP + H(+). The protein operates within glycan metabolism; chondroitin sulfate biosynthesis. It participates in glycan metabolism; heparan sulfate biosynthesis. In terms of biological role, catalyzes the first step in biosynthesis of glycosaminoglycan. Transfers D-xylose from UDP-D-xylose to specific serine residues of the core protein. In Drosophila pseudoobscura pseudoobscura (Fruit fly), this protein is Xylosyltransferase oxt.